A 67-amino-acid polypeptide reads, in one-letter code: Bowman-Birk type proteinase inhibitor 1 (67 aa).

Intrachain disulfides connect Cys5–Cys59, Cys6–Cys21, Cys9–Cys55, Cys11–Cys19, Cys29–Cys36, Cys33–Cys48, and Cys38–Cys46.

It belongs to the Bowman-Birk serine protease inhibitor family. As to quaternary structure, monomer. Although dimerization may occur in solution. As to expression, seed.

Inhibits trypsin but not chymotrypsin. The inhibitor consists of 2 domains and has 2 sites of interaction with trypsin. This Dioclea glabra protein is Bowman-Birk type proteinase inhibitor 1.